The primary structure comprises 95 residues: Large ribosomal subunit protein bL25 (95 aa).

The protein belongs to the bacterial ribosomal protein bL25 family. Part of the 50S ribosomal subunit; part of the 5S rRNA/L5/L18/L25 subcomplex. Contacts the 5S rRNA. Binds to the 5S rRNA independently of L5 and L18.

Functionally, this is one of the proteins that binds to the 5S RNA in the ribosome where it forms part of the central protuberance. In Shewanella frigidimarina (strain NCIMB 400), this protein is Large ribosomal subunit protein bL25.